The following is a 260-amino-acid chain: MRRGAYTPRSTPFPRDRRSYNAGKGRSFRSYRRRGPVRPLARRNLFGDDHARAFTYKTLSEDQFGPDFTIHNNNYKSSYISMPVKTRALSDNRVGDYIKLVNISFTGTVCIKNSQMESDGSPMLGLHGLFTCVLVRDKTPRIYSATEPLIPFPQLFGSINASYADLSIQDPYKDRFTVIRQVSYPVNTEKGDHMCRFKGTRRFGGRYPIWTSFKDDGGSGDSSGLYSNTYKNAILVYYVWLSDVSSQLEMYCKYVTRYIG.

The disordered stretch occupies residues 1-29 (MRRGAYTPRSTPFPRDRRSYNAGKGRSFR). Residues 21–42 (NAGKGRSFRSYRRRGPVRPLAR) carry the Bipartite nuclear localization signal motif. A Nuclear localization signal motif is present at residues 84–100 (VKTRALSDNRVGDYIKL). The segment at 154–191 (QLFGSINASYADLSIQDPYKDRFTVIRQVSYPVNTEKG) is interaction with Arabidopsis thaliana NSI protein.

Belongs to the begomovirus nuclear shuttle protein family. As to quaternary structure, binds to single-stranded and double-stranded viral DNA. Interacts with the host nuclear shuttle interacting (NSI) protein. This interaction may allow NSP to recruit NSI monomers to the viral genome and thus regulate nuclear export of viral genome by NSP.

The protein resides in the host nucleus. Its subcellular location is the host cytoplasm. It localises to the host cell membrane. In terms of biological role, binds to the genomic viral ssDNA, shuttles it into and out of the cell nucleus. Begomoviruses use 2 proteins to transport their DNA from cell to cell. The nuclear shuttle protein (NSP) shuttles it between nucleus and cytoplasm and the movement protein (MP) probably transports the DNA-NSP complex to the cell periphery and facilitates movement across the cell wall. In Indian cassava mosaic virus (ICMV), this protein is Nuclear shuttle protein.